A 112-amino-acid polypeptide reads, in one-letter code: DNA-binding protein Mboo_1886 (112 aa).

The protein belongs to the PDCD5 family.

The polypeptide is DNA-binding protein Mboo_1886 (Methanoregula boonei (strain DSM 21154 / JCM 14090 / 6A8)).